The chain runs to 658 residues: Squalene--hopene cyclase (658 aa).

One copy of the PFTB 1 repeat lies at 69–110 (EAKIGRYLRRIQGEHGGWSLFYGGDLDLSATVKAYFALKMIG). D392 acts as the Proton donor in catalysis. PFTB repeat units follow at residues 418-459 (KARA…GALL), 486-526 (MKAA…NVAA), and 534-584 (IQKA…GLMA).

This sequence belongs to the terpene cyclase/mutase family.

The protein localises to the cell membrane. It carries out the reaction squalene = hop-22(29)-ene. It catalyses the reaction squalene + H2O = hopan-22-ol. It functions in the pathway secondary metabolite biosynthesis; hopanoid biosynthesis. In terms of biological role, catalyzes the cyclization of squalene into hopene. This Zymomonas mobilis subsp. mobilis (strain ATCC 31821 / ZM4 / CP4) protein is Squalene--hopene cyclase (shc).